Here is a 448-residue protein sequence, read N- to C-terminus: Vacuolar amino acid transporter 6 (448 aa).

Over 1 to 7 (MVASIRS) the chain is Cytoplasmic. Residues 8-28 (GVLTLLHTACGAGILAMPYAF) form a helical membrane-spanning segment. The Vacuolar segment spans residues 29–32 (KPFG). A helical transmembrane segment spans residues 33–53 (LIPGVIMIVLCGACAMQSLFI). Residues 54–80 (QARVAKYVPQGRASFSALTRLINPNLG) lie on the Cytoplasmic side of the membrane. A helical transmembrane segment spans residues 81-101 (IVFDLAIAIKCFGVGVSYMIV). At 102 to 125 (VGDLMPQIMSVWTRNAWLLNRNVQ) the chain is on the vacuolar side. A helical membrane pass occupies residues 126-146 (ISLIMLFFVAPLSFLKKLNSL). The Cytoplasmic segment spans residues 147 to 150 (RYAS). A helical transmembrane segment spans residues 151–171 (MVAISSVAYLCVLVLLHYVAP). Residues 172–195 (SDEILRLKGRISYLLPPQSHDLNV) lie on the Vacuolar side of the membrane. A helical transmembrane segment spans residues 196-216 (LNTLPIFVFAYTCHHNMFSII). Residues 217 to 229 (NEQRSSRFEHVMK) are Cytoplasmic-facing. A helical transmembrane segment spans residues 230–250 (IPLIAISLALILYIAIGCAGY). Over 251 to 267 (LTFGDNIIGNIIMLYPQ) the chain is Vacuolar. A helical transmembrane segment spans residues 268–288 (AVSSTIGRIAIVLLVMLAFPL). Residues 289 to 357 (QCHPARASIH…PKETPLRGKS (69 aa)) are Cytoplasmic-facing. The residue at position 344 (Ser344) is a Phosphoserine. The chain crosses the membrane as a helical span at residues 358-378 (FIVITCSILVASYLVAISVSS). At 379 to 381 (LAR) the chain is on the vacuolar side. A helical membrane pass occupies residues 382-402 (VLAIVGATGSTSISFILPGLF). The Cytoplasmic segment spans residues 403–424 (GYKLIGTEHKTAVPLTTKIFKY). Residues 425 to 445 (TGLLLFIWGLIIMITCLTAAL) form a helical membrane-spanning segment. The Vacuolar portion of the chain corresponds to 446–448 (KLN).

The protein belongs to the amino acid/polyamine transporter 2 family.

The protein localises to the vacuole membrane. Its function is as follows. Involved in amino acid efflux from the vacuole to the cytoplasm. Capable of transporting aspartate and glutamate. Requires ATP for function. The chain is Vacuolar amino acid transporter 6 (AVT6) from Saccharomyces cerevisiae (strain ATCC 204508 / S288c) (Baker's yeast).